The primary structure comprises 385 residues: Zinc finger protein B385R (385 aa).

2 C2H2-type zinc fingers span residues 166–190 and 168–190; these read LQCPNCGCIQELMGTIFDETHFYNH and CPNCGCIQELMGTIFDETHFYNH.

This sequence belongs to the asfivirus B385R family.

This African swine fever virus (isolate Tick/South Africa/Pretoriuskop Pr4/1996) (ASFV) protein is Zinc finger protein B385R.